A 124-amino-acid polypeptide reads, in one-letter code: Mini zinc finger protein 4 (124 aa).

The ZF-HD dimerization-type; degenerate zinc-finger motif lies at 35–84; it reads YGECRRNHAARMGGHAVDGCREFLAEGEEGTGGALRCAACGCHRSFHRRV.

In terms of assembly, homo- and heterodimers.

It localises to the cytoplasm. Its function is as follows. Inhibits zinc finger homeodomain (ZHD) transcription factors, by interacting with them to prevent both their nuclear localization and their DNA-binding properties. This is Mini zinc finger protein 4 (MIF4) from Oryza sativa subsp. japonica (Rice).